The chain runs to 299 residues: Oxygen-dependent coproporphyrinogen-III oxidase (299 aa).

Serine 92 serves as a coordination point for substrate. Residues histidine 96 and histidine 106 each coordinate a divalent metal cation. Histidine 106 (proton donor) is an active-site residue. 108 to 110 (NVR) lines the substrate pocket. A divalent metal cation is bound by residues histidine 145 and histidine 175. Residues 240 to 275 (YVEFNLVWDRGTLFGLQTGGRTESILMSMPPLVRWE) form an important for dimerization region. Position 258 to 260 (258 to 260 (GGR)) interacts with substrate.

It belongs to the aerobic coproporphyrinogen-III oxidase family. Homodimer. It depends on a divalent metal cation as a cofactor.

The protein localises to the cytoplasm. The enzyme catalyses coproporphyrinogen III + O2 + 2 H(+) = protoporphyrinogen IX + 2 CO2 + 2 H2O. Its pathway is porphyrin-containing compound metabolism; protoporphyrin-IX biosynthesis; protoporphyrinogen-IX from coproporphyrinogen-III (O2 route): step 1/1. Functionally, involved in the heme biosynthesis. Catalyzes the aerobic oxidative decarboxylation of propionate groups of rings A and B of coproporphyrinogen-III to yield the vinyl groups in protoporphyrinogen-IX. The chain is Oxygen-dependent coproporphyrinogen-III oxidase from Salmonella schwarzengrund (strain CVM19633).